The chain runs to 357 residues: Cytoplasmic tRNA 2-thiolation protein 1 (357 aa).

The disordered stretch occupies residues 314-348 (GVSRTRGRRGEKAGLHPDVGRGGGGGSSGPAEVAS). Positions 321–332 (RRGEKAGLHPDV) are enriched in basic and acidic residues.

The protein belongs to the TtcA family. CTU1/NCS6/ATPBD3 subfamily.

It localises to the cytoplasm. The protein operates within tRNA modification; 5-methoxycarbonylmethyl-2-thiouridine-tRNA biosynthesis. Functionally, plays a central role in 2-thiolation of mcm(5)S(2)U at tRNA wobble positions of tRNA(Lys), tRNA(Glu) and tRNA(Gln). Directly binds tRNAs and probably acts by catalyzing adenylation of tRNAs, an intermediate required for 2-thiolation. It is unclear whether it acts as a sulfurtransferase that transfers sulfur from thiocarboxylated URM1 onto the uridine of tRNAs at wobble position. This chain is Cytoplasmic tRNA 2-thiolation protein 1, found in Chlamydomonas reinhardtii (Chlamydomonas smithii).